Here is a 165-residue protein sequence, read N- to C-terminus: uncharacterized protein (165 aa).

One can recognise a Macro domain in the interval 1–165 (MDIKVVKGSI…EAWEKVLGLR (165 aa)).

This is an uncharacterized protein from Aquifex aeolicus (strain VF5).